Reading from the N-terminus, the 262-residue chain is Adenosylcobinamide-GDP ribazoletransferase (262 aa).

The next 8 membrane-spanning stretches (helical) occupy residues 4 to 21 (AWSG…IPIR), 37 to 57 (AFPL…FIFS), 62 to 82 (LSPL…AGGL), 112 to 132 (VGAF…LFVF), 141 to 161 (IFLI…LLIY), 181 to 201 (YDAH…CAIH), 202 to 222 (FSVW…VFVA), and 236 to 256 (DALG…IWLL).

It belongs to the CobS family. It depends on Mg(2+) as a cofactor.

Its subcellular location is the cell membrane. The enzyme catalyses alpha-ribazole + adenosylcob(III)inamide-GDP = adenosylcob(III)alamin + GMP + H(+). The catalysed reaction is alpha-ribazole 5'-phosphate + adenosylcob(III)inamide-GDP = adenosylcob(III)alamin 5'-phosphate + GMP + H(+). It functions in the pathway cofactor biosynthesis; adenosylcobalamin biosynthesis; adenosylcobalamin from cob(II)yrinate a,c-diamide: step 7/7. Functionally, joins adenosylcobinamide-GDP and alpha-ribazole to generate adenosylcobalamin (Ado-cobalamin). Also synthesizes adenosylcobalamin 5'-phosphate from adenosylcobinamide-GDP and alpha-ribazole 5'-phosphate. This Geobacillus sp. (strain WCH70) protein is Adenosylcobinamide-GDP ribazoletransferase.